The following is a 331-amino-acid chain: ATPase GET3 (331 aa).

32–39 is a binding site for ATP; sequence KGGVGKTT. D61 is a catalytic residue. Residues E235 and N262 each contribute to the ATP site. C273 and C276 together coordinate Zn(2+).

Belongs to the arsA ATPase family. Homodimer.

The protein localises to the cytoplasm. It is found in the endoplasmic reticulum. ATPase required for the post-translational delivery of tail-anchored (TA) proteins to the endoplasmic reticulum. Recognizes and selectively binds the transmembrane domain of TA proteins in the cytosol. This complex then targets to the endoplasmic reticulum by membrane-bound receptors, where the tail-anchored protein is released for insertion. This process is regulated by ATP binding and hydrolysis. ATP binding drives the homodimer towards the closed dimer state, facilitating recognition of newly synthesized TA membrane proteins. ATP hydrolysis is required for insertion. Subsequently, the homodimer reverts towards the open dimer state, lowering its affinity for the membrane-bound receptor, and returning it to the cytosol to initiate a new round of targeting. This is ATPase GET3 from Malassezia globosa (strain ATCC MYA-4612 / CBS 7966) (Dandruff-associated fungus).